Here is a 127-residue protein sequence, read N- to C-terminus: MSIPNNLRYSEEHEWVKTEGNEVVIGITHFAQGELGDIVFVELPEVGATIEADEPFGSVESVKTVSELYAPVSGKVVAVNEELSDQPELVNESPYEGAWMVKVELSDASQVEKLLTAEKYAEMTNQD.

Residues 22–104 (EVVIGITHFA…YEGAWMVKVE (83 aa)) form the Lipoyl-binding domain. An N6-lipoyllysine modification is found at lysine 63.

This sequence belongs to the GcvH family. The glycine cleavage system is composed of four proteins: P, T, L and H. Requires (R)-lipoate as cofactor.

In terms of biological role, the glycine cleavage system catalyzes the degradation of glycine. The H protein shuttles the methylamine group of glycine from the P protein to the T protein. Its function is as follows. Is also involved in protein lipoylation via its role as an octanoyl/lipoyl carrier protein intermediate. The protein is Glycine cleavage system H protein of Bacillus cereus (strain G9842).